The primary structure comprises 136 residues: Large ribosomal subunit protein uL16 (136 aa).

Belongs to the universal ribosomal protein uL16 family. Part of the 50S ribosomal subunit.

Binds 23S rRNA and is also seen to make contacts with the A and possibly P site tRNAs. The protein is Large ribosomal subunit protein uL16 of Buchnera aphidicola subsp. Acyrthosiphon pisum (strain 5A).